The following is a 467-amino-acid chain: Siroheme synthase (467 aa).

Positions 1–203 (METLPIFMKL…GQEEAARHAM (203 aa)) are precorrin-2 dehydrogenase /sirohydrochlorin ferrochelatase. NAD(+)-binding positions include 22–23 (EI) and 43–44 (PE). At serine 128 the chain carries Phosphoserine. The segment at 216–467 (GEVYLVGGGP…APSPEVVSAG (252 aa)) is uroporphyrinogen-III C-methyltransferase. Proline 225 provides a ligand contact to S-adenosyl-L-methionine. The active-site Proton acceptor is the aspartate 248. The active-site Proton donor is the lysine 270. S-adenosyl-L-methionine contacts are provided by residues 301–303 (GGD), isoleucine 306, 331–332 (TA), methionine 383, and glycine 412.

This sequence in the N-terminal section; belongs to the precorrin-2 dehydrogenase / sirohydrochlorin ferrochelatase family. It in the C-terminal section; belongs to the precorrin methyltransferase family.

It carries out the reaction uroporphyrinogen III + 2 S-adenosyl-L-methionine = precorrin-2 + 2 S-adenosyl-L-homocysteine + H(+). The enzyme catalyses precorrin-2 + NAD(+) = sirohydrochlorin + NADH + 2 H(+). The catalysed reaction is siroheme + 2 H(+) = sirohydrochlorin + Fe(2+). Its pathway is cofactor biosynthesis; adenosylcobalamin biosynthesis; precorrin-2 from uroporphyrinogen III: step 1/1. It functions in the pathway cofactor biosynthesis; adenosylcobalamin biosynthesis; sirohydrochlorin from precorrin-2: step 1/1. It participates in porphyrin-containing compound metabolism; siroheme biosynthesis; precorrin-2 from uroporphyrinogen III: step 1/1. The protein operates within porphyrin-containing compound metabolism; siroheme biosynthesis; siroheme from sirohydrochlorin: step 1/1. Its pathway is porphyrin-containing compound metabolism; siroheme biosynthesis; sirohydrochlorin from precorrin-2: step 1/1. In terms of biological role, multifunctional enzyme that catalyzes the SAM-dependent methylations of uroporphyrinogen III at position C-2 and C-7 to form precorrin-2 via precorrin-1. Then it catalyzes the NAD-dependent ring dehydrogenation of precorrin-2 to yield sirohydrochlorin. Finally, it catalyzes the ferrochelation of sirohydrochlorin to yield siroheme. This is Siroheme synthase from Methylobacillus flagellatus (strain ATCC 51484 / DSM 6875 / VKM B-1610 / KT).